The chain runs to 307 residues: Probable protein S-acyltransferase 14 (307 aa).

The next 2 helical transmembrane spans lie at 22 to 42 and 63 to 83; these read LGSI…YAVV and ILIL…SVVF. The DHHC domain occupies 127–177; that stretch reads RFCRKCNQLKPSRCHHCSVCGRCVLKMDHHCVWVVNCVGALNYKYFLLFLF. Cys157 functions as the S-palmitoyl cysteine intermediate in the catalytic mechanism. Helical transmembrane passes span 171-191 and 213-233; these read YFLL…LVLM and TFLA…FLIM.

This sequence belongs to the DHHC palmitoyltransferase family.

The protein resides in the golgi apparatus. Its subcellular location is the trans-Golgi network membrane. The enzyme catalyses L-cysteinyl-[protein] + hexadecanoyl-CoA = S-hexadecanoyl-L-cysteinyl-[protein] + CoA. Its function is as follows. Palmitoyl acyltransferase. The protein is Probable protein S-acyltransferase 14 (PAT14) of Arabidopsis thaliana (Mouse-ear cress).